The following is a 158-amino-acid chain: Sec-independent protein translocase protein TatB (158 aa).

A helical transmembrane segment spans residues M1–G21. Residues R73–A158 are disordered. A compositionally biased stretch (basic and acidic residues) spans A83–P92. Composition is skewed to low complexity over residues K94–A132 and A138–A158.

This sequence belongs to the TatB family. As to quaternary structure, the Tat system comprises two distinct complexes: a TatABC complex, containing multiple copies of TatA, TatB and TatC subunits, and a separate TatA complex, containing only TatA subunits. Substrates initially bind to the TatABC complex, which probably triggers association of the separate TatA complex to form the active translocon.

It localises to the cell inner membrane. Its function is as follows. Part of the twin-arginine translocation (Tat) system that transports large folded proteins containing a characteristic twin-arginine motif in their signal peptide across membranes. Together with TatC, TatB is part of a receptor directly interacting with Tat signal peptides. TatB may form an oligomeric binding site that transiently accommodates folded Tat precursor proteins before their translocation. In Cereibacter sphaeroides (strain ATCC 17029 / ATH 2.4.9) (Rhodobacter sphaeroides), this protein is Sec-independent protein translocase protein TatB.